We begin with the raw amino-acid sequence, 478 residues long: Glycogen synthase (478 aa).

Lys-15 is an ADP-alpha-D-glucose binding site.

This sequence belongs to the glycosyltransferase 1 family. Bacterial/plant glycogen synthase subfamily.

It catalyses the reaction [(1-&gt;4)-alpha-D-glucosyl](n) + ADP-alpha-D-glucose = [(1-&gt;4)-alpha-D-glucosyl](n+1) + ADP + H(+). It functions in the pathway glycan biosynthesis; glycogen biosynthesis. In terms of biological role, synthesizes alpha-1,4-glucan chains using ADP-glucose. In Caldicellulosiruptor bescii (strain ATCC BAA-1888 / DSM 6725 / KCTC 15123 / Z-1320) (Anaerocellum thermophilum), this protein is Glycogen synthase.